The primary structure comprises 383 residues: Probable acyl-CoA dehydrogenase YdiO (383 aa).

Belongs to the acyl-CoA dehydrogenase family. FAD is required as a cofactor.

The enzyme catalyses a 2,3-saturated acyl-CoA + A = a 2,3-dehydroacyl-CoA + AH2. The chain is Probable acyl-CoA dehydrogenase YdiO (ydiO) from Escherichia coli O157:H7.